We begin with the raw amino-acid sequence, 212 residues long: MRSADLTAHARIREAAIEQFGRHGFGVGLRAIAEAAGVSAALVIHHFGSKEGLRKACDDFVAEEIRSSKAAALKSNDPTTWLAQMAEIESYAPLMAYLVRSMQSGGELAKMLWQKMIDNAEEYLDEGVRAGTVKPSRDPRARARFLAITGGGGFLLYLQMHENPTDLRAALRDYAHDMVLPSLEVYTEGLLADRAMYEAFLAEAQQGEAHVG.

One can recognise an HTH tetR-type domain in the interval 6 to 65 (LTAHARIREAAIEQFGRHGFGVGLRAIAEAAGVSAALVIHHFGSKEGLRKACDDFVAEEI). Residues 28 to 47 (GLRAIAEAAGVSAALVIHHF) constitute a DNA-binding region (H-T-H motif).

In terms of assembly, homodimer. Interacts with long chain acyl-CoA derivatives. Interacts with several drugs such rhodamine 6G, ethidium and safranin O.

Interaction with long chain acyl-CoA derivatives (oleoyl-CoA and, to lesser extent, stearoyl-CoA) prevents binding to DNA, leading to the expression of the target genes. Long chain acyl-CoA derivatives may serve as biological indicators of the bacterial metabolic state. Functionally, regulates the expression of the Rv1217c-Rv1218c multidrug efflux system and its own expression. Acts by binding to promoter regions of Rv1219c and upstream of the Rv1218c gene. Important for survival in prolonged stationary phase and during macrophage infection. May be used to eliminate non-growing mycobacteria. The protein is HTH-type transcriptional regulatory protein RaaS of Mycobacterium tuberculosis (strain ATCC 25618 / H37Rv).